The chain runs to 399 residues: MGKSMKVDDIITFAFKNIKQKRTQSLLTIIGIVIGVLAMVSLISLGYGVQNYIHEEMMKMGSNKITILPMKQFGVPPSHLFTKKEIKAIKNVKGVDTVMYGWYGGCEIEYNGEKKFVSYYYAIPSKLREVYKDSGYDIEEGRWLEDNDKYACVIGYGTAHNLFDREIKVGDVIKIKDKKFRVVGILKQIGNQQDDNSIILNIDVGEKLFGNEGKYNFISVTVKEGEDIEKVSEEIKKALKKSFGDEDFSVLTAEQLAKTVSSVLGVITIFVVGVAAISLLVGAVGISNTMHMSILERRKDIGILKALGAETTDILAIFVVESGFLGLFGGIVGLVLGILLAEVIEALAHKMGYLMVNAWISWELIVGVLIFSFLVGVISGYFPARSGAKLNPIETLRGE.

Helical transmembrane passes span 26 to 46 (LLTIIGIVIGVLAMVSLISLG), 266 to 286 (VITIFVVGVAAISLLVGAVGI), 301 to 321 (IGILKALGAETTDILAIFVVE), 324 to 344 (FLGLFGGIVGLVLGILLAEVI), and 358 to 378 (AWISWELIVGVLIFSFLVGVI).

It belongs to the ABC-4 integral membrane protein family.

It localises to the cell membrane. This is an uncharacterized protein from Methanocaldococcus jannaschii (strain ATCC 43067 / DSM 2661 / JAL-1 / JCM 10045 / NBRC 100440) (Methanococcus jannaschii).